A 598-amino-acid polypeptide reads, in one-letter code: MRNKICKELNNTDIGKLVNLCGWVDRRRDHGGVIFIDLRDHSGFLQITINPDDGAALFKQAETLRNETVIMVSGIINERPKDSINTNLSTGELELKVKDLQILNQIKKNLPFPVSIHDYENTKEELRLKYRYLDLRRGKLLENLKTRHKIIKVAREFLDNFGFTEVETPLLTKSTPEGARDFLVPARLSNGEFFALPQSPQLFKQLLMVGGLDKYYQIAKCFRDEDLRADRQPEFTQLDIEMSFISEEEIISFNESLIKKIWKEVLNIKFNNAFPRMSWQEAMDNYGTDRPDTRYQMLLKDLGGILGDIGFNIFTKAIKSGGYIKSITVKGGNSSISNVRIKPGGDIFQVAKDAGAGGLAFIRVKGDELETIGAIKNNLSEEHIADILKITEAKDGDLILLGAGDKLIVNQSLDRVRQYIAKDLNLIDKSKWNFLWVTDFPMFERNEEENRYEALHHPFCSPKNIKSKDSENLKKEIESSTANAYDLVLNGLELGGGSLRIHEANLQREVLKMVGLTDKEIDEKFGFLIEALEMGAPPHGGIAFGLDRITMLIIGTDSIRETIAFPKNQQAKCLLTNAPSNVSESQLKELDIEITIDE.

Glutamate 177 serves as a coordination point for L-aspartate. Positions 201 to 204 are aspartate; that stretch reads QLFK. Arginine 223 lines the L-aspartate pocket. Residues 223-225 and glutamine 232 each bind ATP; that span reads RDE. Histidine 456 contacts L-aspartate. Glutamate 493 is an ATP binding site. Arginine 500 is a binding site for L-aspartate. 545-548 contributes to the ATP binding site; the sequence is GLDR.

This sequence belongs to the class-II aminoacyl-tRNA synthetase family. Type 1 subfamily. Homodimer.

It localises to the cytoplasm. The enzyme catalyses tRNA(Asx) + L-aspartate + ATP = L-aspartyl-tRNA(Asx) + AMP + diphosphate. Functionally, aspartyl-tRNA synthetase with relaxed tRNA specificity since it is able to aspartylate not only its cognate tRNA(Asp) but also tRNA(Asn). Reaction proceeds in two steps: L-aspartate is first activated by ATP to form Asp-AMP and then transferred to the acceptor end of tRNA(Asp/Asn). The sequence is that of Aspartate--tRNA(Asp/Asn) ligase from Prochlorococcus marinus (strain MIT 9301).